The following is a 100-amino-acid chain: Conantokin-G (100 aa).

The N-terminal stretch at 1 to 21 is a signal peptide; the sequence is MHLYTYLYLLVPLVTFHLILG. Positions 22 to 80 are excised as a propeptide; that stretch reads TGTLDDGGALTERRSADATALKAEPVLLQKSAARSTDDNGKDRLTQMKRILKQRGNKAR. Residues 52 to 100 form a disordered region; that stretch reads SAARSTDDNGKDRLTQMKRILKQRGNKARGEEELQENQELIREKSNGKR. Residues 56-66 are compositionally biased toward basic and acidic residues; the sequence is STDDNGKDRLT. The gamma-carboxylation recognition sequence that plays a role in the conversion of Glu to carboxy-Glu (Gla) stretch occupies residues 61–80; it reads GKDRLTQMKRILKQRGNKAR. A divalent metal cation is bound at residue glutamate 83. 4-carboxyglutamate occurs at positions 83, 84, 87, 90, and 94. A divalent metal cation is bound by residues glutamate 87, glutamate 90, and glutamate 94. The segment covering 90 to 100 has biased composition (basic and acidic residues); it reads ELIREKSNGKR. Asparagine 97 bears the Asparagine amide mark.

It belongs to the conotoxin B superfamily. It depends on Ca(2+) as a cofactor. Mg(2+) serves as cofactor. Expressed by the venom duct.

It is found in the secreted. Conantokins inhibit N-methyl-D-aspartate (NMDA) receptors. This toxin is selective for the NR2B/GRIN2B subunit. Induces sleep-like symptoms in young mice and hyperactivity in older mice. This is Conantokin-G from Conus geographus (Geography cone).